We begin with the raw amino-acid sequence, 357 residues long: MSQSGKNGLTYSDAGVDIDAGNLLVEKIKPAVRSTRRPGGDGEIGGFGGLFDLKAAAFTDPVLVAANDGVGTKLKIAIDADYHDTVGIDLVAMCVNDLVVQGAEPLFFLDYFATGKLDPDQGAAIVGGIAARCREAGCALIGGETAEMPGMYSSGDYDLAGFAVGAAERGKLLPSGDIAEGDVILGLASSGVHSNGFSLVRKIVELSGLDWSAAAPFAERRLLGEALLEPTRIYVKPLLKAIRETGAIKALAHITGGGFPENIPRVLPKHLAAEIDLDAVKVPPVFSWLAKTGGVESREMLRTFNCGVGMIAVVAAENVAAVSEALEAEGETVITLGRMIVRDEGAAGTVYKGTLAI.

Belongs to the AIR synthase family.

Its subcellular location is the cytoplasm. It catalyses the reaction 2-formamido-N(1)-(5-O-phospho-beta-D-ribosyl)acetamidine + ATP = 5-amino-1-(5-phospho-beta-D-ribosyl)imidazole + ADP + phosphate + H(+). The protein operates within purine metabolism; IMP biosynthesis via de novo pathway; 5-amino-1-(5-phospho-D-ribosyl)imidazole from N(2)-formyl-N(1)-(5-phospho-D-ribosyl)glycinamide: step 2/2. The protein is Phosphoribosylformylglycinamidine cyclo-ligase of Rhizobium leguminosarum.